The primary structure comprises 1264 residues: Protein fantom (1264 aa).

4 coiled-coil regions span residues 64 to 143, 196 to 268, 299 to 454, and 488 to 555; these read LKQH…LQVQ, YSNS…NVET, LRIS…ESDI, and NKDL…VHLL. 2 C2 domains span residues 577 to 714 and 773 to 897; these read KQYK…FCTT and AATT…SGIF. Disordered stretches follow at residues 979–1018 and 1047–1093; these read DTISHPSPETSPPPKDIKDSSPEVGPKPENGLSAVAYPSK and QLAS…NTKQ. The span at 1056–1080 shows a compositional bias: acidic residues; that stretch reads SEDETEITEELEPEDEDRSASDSDD.

It belongs to the RPGRIP1 family. In terms of assembly, interacts with NPHP4 and NPHP1; NPHP1, NPHP4 and RPGRIP1L are proposed to form a functional NPHP1-4-8 module localized to cell-cell contacts and the ciliary transition zone; NPHP4 mediates the interaction between NPHP1 and RPGRIP1L. Interacts with IQCB1; the interaction likely requires additional interactors. Interacts with TBXA2R (via C-terminus), RPGR, NEK4. Interacts with NPHP4, INVS and DVL2; proposed to form a complex involved in DVL2 stabilization. Interacts with PSMD2. As to expression, ubiquitously expressed. Not found in heart and skin.

It is found in the cytoplasm. Its subcellular location is the cytoskeleton. It localises to the cilium basal body. The protein localises to the cilium axoneme. The protein resides in the microtubule organizing center. It is found in the centrosome. Its subcellular location is the cell junction. It localises to the tight junction. Its function is as follows. Negatively regulates signaling through the G-protein coupled thromboxane A2 receptor (TBXA2R). May be involved in mechanisms like programmed cell death, craniofacial development, patterning of the limbs, and formation of the left-right axis. Involved in the organization of apical junctions; the function is proposed to implicate a NPHP1-4-8 module. Does not seem to be strictly required for ciliogenesis. Involved in establishment of planar cell polarity such as in cochlear sensory epithelium and is proposed to implicate stabilization of disheveled proteins. Involved in regulation of proteasomal activity at the primary cilium probably implicating association with PSDM2. This is Protein fantom (Rpgrip1l) from Mus musculus (Mouse).